The chain runs to 510 residues: Glutamate decarboxylase (510 aa).

107-109 (QLS) is a substrate binding site. Residue Lys-322 is modified to N6-(pyridoxal phosphate)lysine. Arg-483 provides a ligand contact to substrate.

This sequence belongs to the group II decarboxylase family. Homodimer. Pyridoxal 5'-phosphate is required as a cofactor. As to expression, expressed in the head (at protein level).

The enzyme catalyses L-glutamate + H(+) = 4-aminobutanoate + CO2. Its function is as follows. Catalyzes the production of GABA. This is Glutamate decarboxylase (Gad1) from Drosophila melanogaster (Fruit fly).